The sequence spans 63 residues: Keratin-associated protein 19-8 (63 aa).

The protein belongs to the KRTAP type 19 family. As to quaternary structure, interacts with hair keratins.

In terms of biological role, in the hair cortex, hair keratin intermediate filaments are embedded in an interfilamentous matrix, consisting of hair keratin-associated proteins (KRTAP), which are essential for the formation of a rigid and resistant hair shaft through their extensive disulfide bond cross-linking with abundant cysteine residues of hair keratins. The matrix proteins include the high-sulfur and high-glycine-tyrosine keratins. This chain is Keratin-associated protein 19-8 (KRTAP19-8), found in Homo sapiens (Human).